The following is a 435-amino-acid chain: tRNA(Ile)-lysidine synthase (435 aa).

23 to 28 contacts ATP; it reads SGGMDS.

The protein belongs to the tRNA(Ile)-lysidine synthase family.

It is found in the cytoplasm. It carries out the reaction cytidine(34) in tRNA(Ile2) + L-lysine + ATP = lysidine(34) in tRNA(Ile2) + AMP + diphosphate + H(+). Functionally, ligates lysine onto the cytidine present at position 34 of the AUA codon-specific tRNA(Ile) that contains the anticodon CAU, in an ATP-dependent manner. Cytidine is converted to lysidine, thus changing the amino acid specificity of the tRNA from methionine to isoleucine. The protein is tRNA(Ile)-lysidine synthase of Xanthomonas campestris pv. campestris (strain 8004).